Consider the following 94-residue polypeptide: Sec-independent protein translocase protein TatA (94 aa).

Residues 1-21 form a helical membrane-spanning segment; the sequence is MFGRLGAPEIILILVVIILLF. Residues 44-94 are disordered; it reads AKAMKSEGQESTPAGPPNTDEQPPAQRTIQAAPGDVTSSRPVSEPTDTTKR. Positions 62-72 are enriched in polar residues; that stretch reads TDEQPPAQRTI.

It belongs to the TatA/E family. The Tat system comprises two distinct complexes: a TatABC complex, containing multiple copies of TatA, TatB and TatC subunits, and a separate TatA complex, containing only TatA subunits. Substrates initially bind to the TatABC complex, which probably triggers association of the separate TatA complex to form the active translocon.

The protein localises to the cell membrane. Functionally, part of the twin-arginine translocation (Tat) system that transports large folded proteins containing a characteristic twin-arginine motif in their signal peptide across membranes. TatA could form the protein-conducting channel of the Tat system. This chain is Sec-independent protein translocase protein TatA, found in Streptomyces avermitilis (strain ATCC 31267 / DSM 46492 / JCM 5070 / NBRC 14893 / NCIMB 12804 / NRRL 8165 / MA-4680).